A 161-amino-acid chain; its full sequence is Lectin-like protein EP153R (161 aa).

Residues Met1–Tyr30 are Cytoplasmic-facing. A helical transmembrane segment spans residues Ile31 to Trp51. At Glu52 to Lys161 the chain is on the extracellular side. Cys66 and Cys77 are disulfide-bonded. Positions Cys66 to Ser160 are lectin-like. N-linked (GlcNAc...) asparagine; by host glycosylation is found at Asn89, Asn98, Asn104, Asn110, Asn116, Asn130, and Asn136. A disulfide bond links Cys94 and Cys159.

The protein belongs to the asfivirus lectin-like protein family. In terms of assembly, homodimer.

The protein localises to the host endoplasmic reticulum membrane. In terms of biological role, down-regulates MHC-I expression by impairing the appropriate configuration or presentation into the plasma membrane of the latter. Participates in viral hemadsorption, which may help viral spread. Reduces the transactivating activity of host TP53, thus inhibiting apoptosis. Non-essential for virus growth in swine macrophage cell cultures. The protein is Lectin-like protein EP153R of African swine fever virus (isolate Tick/Malawi/Lil 20-1/1983) (ASFV).